The following is an 86-amino-acid chain: UPF0297 protein STH1998 (86 aa).

This sequence belongs to the UPF0297 family.

The polypeptide is UPF0297 protein STH1998 (Symbiobacterium thermophilum (strain DSM 24528 / JCM 14929 / IAM 14863 / T)).